Reading from the N-terminus, the 120-residue chain is Alanine racemase (120 aa).

Tyr24 acts as the Proton acceptor; specific for L-alanine in catalysis.

The protein belongs to the alanine racemase family. Homodimer. The cofactor is pyridoxal 5'-phosphate.

The catalysed reaction is L-alanine = D-alanine. Highly specific to D- and L-alanine and does not catalyze the racemization of other amino acids. This is Alanine racemase from Penaeus monodon (Giant tiger prawn).